We begin with the raw amino-acid sequence, 403 residues long: 3-(3-hydroxy-phenyl)propionate transporter (403 aa).

Residues 1–16 (MSTRTPSSSSSRLMLT) are Cytoplasmic-facing. A helical membrane pass occupies residues 17-37 (IGLCFLVALMEGLDLQAAGIA). The Periplasmic segment spans residues 38-53 (AGGIAQAFALDKMQMG). Residues 54–74 (WIFSAGILGLLPGALVGGMLA) traverse the membrane as a helical segment. Residues 75-81 (DRYGRKR) lie on the Cytoplasmic side of the membrane. The helical transmembrane segment at 82–102 (ILIGSVALFGLFSLATAIAWD) threads the bilayer. Residues 103-105 (FPS) lie on the Periplasmic side of the membrane. The chain crosses the membrane as a helical span at residues 106-126 (LVFARLMTGVGLGAALPNLIA). Over 127-142 (LTSEAAGPRFRGTAVS) the chain is Cytoplasmic. A helical membrane pass occupies residues 143–163 (LMYCGVPIGAALAATLGFAGA). Asn-164 is a topological domain (periplasmic). The chain crosses the membrane as a helical span at residues 165 to 185 (LAWQTVFWVGGVVPLILVPLL). Topologically, residues 186-217 (MRWLPESAVFAGEKQSAPPLRALFAPETATAT) are cytoplasmic. The helical transmembrane segment at 218-238 (LLLWLCYFFTLLVVYMLINWL) threads the bilayer. The Periplasmic segment spans residues 239 to 253 (PLLLVEQGFQPSQAA). Residues 254–274 (GVMFALQMGAASGTLMLGALM) traverse the membrane as a helical segment. The Cytoplasmic portion of the chain corresponds to 275–279 (DKLRP). Residues 280–300 (VTMSLLIYSGMLASLLALGTV) traverse the membrane as a helical segment. The Periplasmic segment spans residues 301 to 306 (SSFNGM). Residues 307-327 (LLAGFVAGLFATGGQSVLYAL) form a helical membrane-spanning segment. Over 328-339 (APLFYSSQIRAT) the chain is Cytoplasmic. Residues 340–360 (GVGTAVAVGRLGAMSGPLLAG) form a helical membrane-spanning segment. Residues 361–369 (KMLALGTGT) are Periplasmic-facing. The helical transmembrane segment at 370-390 (VGVMAASAPGILVAGLAVFIL) threads the bilayer. The Cytoplasmic portion of the chain corresponds to 391-403 (MSRRSRIQPCADA).

Belongs to the major facilitator superfamily. Aromatic acid:H(+) symporter (AAHS) (TC 2.A.1.15) family.

Its subcellular location is the cell inner membrane. The catalysed reaction is 3-(3-hydroxyphenyl)propanoate(in) + H(+)(in) = 3-(3-hydroxyphenyl)propanoate(out) + H(+)(out). Its activity is regulated as follows. Inhibited by carbonyl cyanide m-chlorophenylhydrazone (CCCP), which dissipates the proton motive force. In terms of biological role, uptake of 3-(3-hydroxyphenyl)propionate (3HPP) across the cytoplasmic membrane. Transport is driven by the proton motive force. Does not transport benzoate, 3-hydroxybenzoate or gentisate. The sequence is that of 3-(3-hydroxy-phenyl)propionate transporter from Escherichia coli (strain K12).